The primary structure comprises 424 residues: Probable ribonuclease FAU-1 (424 aa).

The protein belongs to the FAU-1 family.

Functionally, probable RNase involved in rRNA stability through maturation and/or degradation of precursor rRNAs. Binds to RNA in loop regions with AU-rich sequences. The protein is Probable ribonuclease FAU-1 of Saccharolobus solfataricus (strain ATCC 35092 / DSM 1617 / JCM 11322 / P2) (Sulfolobus solfataricus).